The sequence spans 436 residues: Trigger factor (436 aa).

Residues 163–248 (GDRVVLDFAG…VKEVAEGVLP (86 aa)) enclose the PPIase FKBP-type domain.

It belongs to the FKBP-type PPIase family. Tig subfamily.

It localises to the cytoplasm. It carries out the reaction [protein]-peptidylproline (omega=180) = [protein]-peptidylproline (omega=0). Its function is as follows. Involved in protein export. Acts as a chaperone by maintaining the newly synthesized protein in an open conformation. Functions as a peptidyl-prolyl cis-trans isomerase. In Bordetella pertussis (strain Tohama I / ATCC BAA-589 / NCTC 13251), this protein is Trigger factor.